A 136-amino-acid chain; its full sequence is S-protein homolog 6 (136 aa).

The first 17 residues, M1 to T17, serve as a signal peptide directing secretion. Residues N76 and N108 are each glycosylated (N-linked (GlcNAc...) asparagine).

This sequence belongs to the plant self-incompatibility (S1) protein family.

Its subcellular location is the secreted. The sequence is that of S-protein homolog 6 from Arabidopsis thaliana (Mouse-ear cress).